Reading from the N-terminus, the 298-residue chain is Tyrosine recombinase XerC (298 aa).

Residues 2–88 form the Core-binding (CB) domain; the sequence is TDLHTDVERY…ALRSFFDWLV (87 aa). Residues 109–288 enclose the Tyr recombinase domain; the sequence is HLPKNIDVDD…DFQHLASVYD (180 aa). Residues arginine 148, lysine 172, histidine 240, arginine 243, and histidine 266 contribute to the active site. Tyrosine 275 acts as the O-(3'-phospho-DNA)-tyrosine intermediate in catalysis.

It belongs to the 'phage' integrase family. XerC subfamily. Forms a cyclic heterotetrameric complex composed of two molecules of XerC and two molecules of XerD, in which XerC interacts with XerD via its C-terminal region, XerD interacts with XerC via its C-terminal region and so on.

It localises to the cytoplasm. FtsK may regulate the catalytic switch between XerC and XerD in the heterotetrameric complex during the two steps of the recombination process. In terms of biological role, site-specific tyrosine recombinase, which acts by catalyzing the cutting and rejoining of the recombining DNA molecules. Binds cooperatively to specific DNA consensus sequences that are separated from XerD binding sites by a short central region, forming the heterotetrameric XerC-XerD complex that recombines DNA substrates. The complex is essential to convert dimers of the bacterial chromosome into monomers to permit their segregation at cell division. It also contributes to the segregational stability of plasmids. In the complex XerC specifically exchanges the top DNA strands. The protein is Tyrosine recombinase XerC of Shigella flexneri serotype 5b (strain 8401).